We begin with the raw amino-acid sequence, 510 residues long: Bifunctional purine biosynthesis protein PurH (510 aa).

The MGS-like domain maps to 1–144 (MSKRALISVT…KNYKDVIVVV (144 aa)).

This sequence belongs to the PurH family.

The catalysed reaction is (6R)-10-formyltetrahydrofolate + 5-amino-1-(5-phospho-beta-D-ribosyl)imidazole-4-carboxamide = 5-formamido-1-(5-phospho-D-ribosyl)imidazole-4-carboxamide + (6S)-5,6,7,8-tetrahydrofolate. The enzyme catalyses IMP + H2O = 5-formamido-1-(5-phospho-D-ribosyl)imidazole-4-carboxamide. The protein operates within purine metabolism; IMP biosynthesis via de novo pathway; 5-formamido-1-(5-phospho-D-ribosyl)imidazole-4-carboxamide from 5-amino-1-(5-phospho-D-ribosyl)imidazole-4-carboxamide (10-formyl THF route): step 1/1. It participates in purine metabolism; IMP biosynthesis via de novo pathway; IMP from 5-formamido-1-(5-phospho-D-ribosyl)imidazole-4-carboxamide: step 1/1. This Clostridioides difficile (strain 630) (Peptoclostridium difficile) protein is Bifunctional purine biosynthesis protein PurH.